The sequence spans 295 residues: Bifunctional protein FolD 1 (295 aa).

Residues 165–167 (GKS), I190, and I231 contribute to the NADP(+) site.

Belongs to the tetrahydrofolate dehydrogenase/cyclohydrolase family. As to quaternary structure, homodimer.

The catalysed reaction is (6R)-5,10-methylene-5,6,7,8-tetrahydrofolate + NADP(+) = (6R)-5,10-methenyltetrahydrofolate + NADPH. It catalyses the reaction (6R)-5,10-methenyltetrahydrofolate + H2O = (6R)-10-formyltetrahydrofolate + H(+). It functions in the pathway one-carbon metabolism; tetrahydrofolate interconversion. In terms of biological role, catalyzes the oxidation of 5,10-methylenetetrahydrofolate to 5,10-methenyltetrahydrofolate and then the hydrolysis of 5,10-methenyltetrahydrofolate to 10-formyltetrahydrofolate. In Rhizorhabdus wittichii (strain DSM 6014 / CCUG 31198 / JCM 15750 / NBRC 105917 / EY 4224 / RW1) (Sphingomonas wittichii), this protein is Bifunctional protein FolD 1.